The sequence spans 208 residues: Putative ribosomal protein uS2-like (208 aa).

This sequence belongs to the universal ribosomal protein uS2 family.

Its subcellular location is the plastid. It is found in the chloroplast. In Chlamydomonas reinhardtii (Chlamydomonas smithii), this protein is Putative ribosomal protein uS2-like (rps2-2).